The following is a 601-amino-acid chain: Elongation factor 4 (601 aa).

One can recognise a tr-type G domain in the interval 6 to 188; the sequence is QCIRNFSIIA…AVVAKVPPPQ (183 aa). GTP is bound by residues 18–23 and 135–138; these read DHGKST and NKID.

Belongs to the TRAFAC class translation factor GTPase superfamily. Classic translation factor GTPase family. LepA subfamily.

The protein localises to the cell membrane. The catalysed reaction is GTP + H2O = GDP + phosphate + H(+). Functionally, required for accurate and efficient protein synthesis under certain stress conditions. May act as a fidelity factor of the translation reaction, by catalyzing a one-codon backward translocation of tRNAs on improperly translocated ribosomes. Back-translocation proceeds from a post-translocation (POST) complex to a pre-translocation (PRE) complex, thus giving elongation factor G a second chance to translocate the tRNAs correctly. Binds to ribosomes in a GTP-dependent manner. In Desulfitobacterium hafniense (strain DSM 10664 / DCB-2), this protein is Elongation factor 4.